A 473-amino-acid chain; its full sequence is ATP synthase subunit beta (473 aa).

158-165 contacts ATP; sequence GGAGVGKT.

Belongs to the ATPase alpha/beta chains family. F-type ATPases have 2 components, CF(1) - the catalytic core - and CF(0) - the membrane proton channel. CF(1) has five subunits: alpha(3), beta(3), gamma(1), delta(1), epsilon(1). CF(0) has three main subunits: a(1), b(2) and c(9-12). The alpha and beta chains form an alternating ring which encloses part of the gamma chain. CF(1) is attached to CF(0) by a central stalk formed by the gamma and epsilon chains, while a peripheral stalk is formed by the delta and b chains.

Its subcellular location is the cell membrane. The catalysed reaction is ATP + H2O + 4 H(+)(in) = ADP + phosphate + 5 H(+)(out). Functionally, produces ATP from ADP in the presence of a proton gradient across the membrane. The catalytic sites are hosted primarily by the beta subunits. This chain is ATP synthase subunit beta, found in Anoxybacillus flavithermus (strain DSM 21510 / WK1).